Consider the following 457-residue polypeptide: Cysteine--tRNA ligase (457 aa).

Cys-28 contributes to the Zn(2+) binding site. Residues 30–40 carry the 'HIGH' region motif; the sequence is PTVYDTAHIGN. The Zn(2+) site is built by Cys-212, His-237, and Glu-241. The 'KMSKS' region signature appears at 270-274; sequence KMSKS. Lys-273 serves as a coordination point for ATP.

This sequence belongs to the class-I aminoacyl-tRNA synthetase family. Monomer. The cofactor is Zn(2+).

Its subcellular location is the cytoplasm. The catalysed reaction is tRNA(Cys) + L-cysteine + ATP = L-cysteinyl-tRNA(Cys) + AMP + diphosphate. The polypeptide is Cysteine--tRNA ligase (Wolbachia pipientis wMel).